Reading from the N-terminus, the 688-residue chain is MANSQRKILVTSALPYANGPIHLGHMLEYIQTDIWSRFQKLRGHECHYICADDAHGTPIMLKAQQMGIEPEEMIAQVNREHQQDFADFNIQFDNFHSTHSVENRELSSDIYLKLRDAGFIKTRTISQLFDPEKSMFLPDRFVKGTCPKCKSEDQYGDNCDNCGATYNPTDLINPKSAVSGATPVMKDSEHFFFDLPAFETMLSEWTRSGAIQDEIANKLGEWFEQGLQQWDISRDAPYFGFEIPDAPGKYFYVWLDAPIGYMGSFKNLCDRREDLNFDDFWAKDSSAEVYHFIGKDIVNFHSLFWPAMLEGAGFRKPTSVFAHGYVTVNGAKMSKSKGTFIKARTYLDNLDPEYLRYYYAAKLSGRIDDLDLNLEDFAQRVNSDLVGKLVNLASRTAGFISKRFDGKLAKVADTSLEQTFLGKQTLIAELYESREFGKAMREIMALADLANAYVADAAPWQLIKDEAKQEEAHQVCSNALNLFRILVTYLKPVLPKLADDVEAFLQFPLTWDNLNADLAGHEIAKFKALMQRVDMKNIEAIIEASKDNLVPAEAPKKADSKKATDTPVDTRPPLESDPISEEISFEDFAKIDLRIARIAKAEHVPEANKLLKLQLDLGGETKQVFAGIKSAYAPEDLEGKLTVMVANLAPRKMRFGMSEGMVLAAGPGNKDLWILEPHEGAQPGMRVK.

A 'HIGH' region motif is present at residues 15–25 (PYANGPIHLGH). The Zn(2+) site is built by Cys-146, Cys-149, Cys-159, and Cys-162. The 'KMSKS' region motif lies at 332–336 (KMSKS). Lys-335 contacts ATP. Residues 552–576 (AEAPKKADSKKATDTPVDTRPPLES) are disordered. The segment covering 554–564 (APKKADSKKAT) has biased composition (basic and acidic residues). The 102-residue stretch at 587–688 (DFAKIDLRIA…EGAQPGMRVK (102 aa)) folds into the tRNA-binding domain.

Belongs to the class-I aminoacyl-tRNA synthetase family. MetG type 1 subfamily. As to quaternary structure, homodimer. The cofactor is Zn(2+).

Its subcellular location is the cytoplasm. It catalyses the reaction tRNA(Met) + L-methionine + ATP = L-methionyl-tRNA(Met) + AMP + diphosphate. Is required not only for elongation of protein synthesis but also for the initiation of all mRNA translation through initiator tRNA(fMet) aminoacylation. The chain is Methionine--tRNA ligase from Shewanella woodyi (strain ATCC 51908 / MS32).